We begin with the raw amino-acid sequence, 301 residues long: Acetylglutamate kinase (301 aa).

Substrate-binding positions include 72 to 73 (GG), R94, and N199.

Belongs to the acetylglutamate kinase family. ArgB subfamily.

The protein resides in the cytoplasm. It catalyses the reaction N-acetyl-L-glutamate + ATP = N-acetyl-L-glutamyl 5-phosphate + ADP. It participates in amino-acid biosynthesis; L-arginine biosynthesis; N(2)-acetyl-L-ornithine from L-glutamate: step 2/4. Functionally, catalyzes the ATP-dependent phosphorylation of N-acetyl-L-glutamate. The protein is Acetylglutamate kinase of Bartonella henselae (strain ATCC 49882 / DSM 28221 / CCUG 30454 / Houston 1) (Rochalimaea henselae).